Here is a 391-residue protein sequence, read N- to C-terminus: MAKSKFERTKPHVNIGTIGHVDHGKTSLTAAITKFFGEFKAYDQIDAAPEERARGITISTAHVEYETANRHYAHVDCPGHADYVKNMITGAAQMDGAILVVSAADGPMPQTREHILLARQVGVPAIVVFLNKCDQVDDAELLELVELEVRELLSKYEFPGDEIPIIKGSALAALEDSSKELGEDAIRNLMDAVDSYIPTPERPIDQPFLMPIEDVFSISGRGTVVTGRVERGIVKVGEEVEIVGIKATTKTTVTGVEMFRKLLDQGQAGDNIGALIRGVGREDVERGQVLCKPGSVKPHTKFKAEAYILTKDEGGRHTPFFTNYRPQFYFRTTDVTGVVTLPAGTEMVMPGDNVAMDVTLIVPIAMEEKLRFAIREGGRTVGAGIVSSIIE.

The tr-type G domain occupies 10-201; it reads KPHVNIGTIG…AVDSYIPTPE (192 aa). The segment at 19–26 is G1; sequence GHVDHGKT. 19–26 contributes to the GTP binding site; that stretch reads GHVDHGKT. Mg(2+) is bound at residue T26. The segment at 55–59 is G2; sequence GITIS. Positions 76–79 are G3; the sequence is DCPG. Residues 76–80 and 131–134 each bind GTP; these read DCPGH and NKCD. A G4 region spans residues 131 to 134; the sequence is NKCD. The interval 169 to 171 is G5; sequence SAL.

Belongs to the TRAFAC class translation factor GTPase superfamily. Classic translation factor GTPase family. EF-Tu/EF-1A subfamily. In terms of assembly, monomer.

It localises to the cytoplasm. It catalyses the reaction GTP + H2O = GDP + phosphate + H(+). Its function is as follows. GTP hydrolase that promotes the GTP-dependent binding of aminoacyl-tRNA to the A-site of ribosomes during protein biosynthesis. This is Elongation factor Tu from Brucella canis (strain ATCC 23365 / NCTC 10854 / RM-666).